The chain runs to 1331 residues: Contactin-associated protein-like 2 (1331 aa).

The N-terminal stretch at 1–27 (MLAAPRAGCGAALLLWIVSSCLCRAWT) is a signal peptide. Topologically, residues 28-1262 (APSTSQKCDE…IRNGVNRNSA (1235 aa)) are extracellular. Positions 35-181 (CDEPLVSGLP…IGLRIEVYGC (147 aa)) constitute an F5/8 type C domain. A disulfide bridge links cysteine 35 with cysteine 181. Laminin G-like domains follow at residues 187–368 (VINF…SFSC) and 373–552 (TVPV…IDMC). N-linked (GlcNAc...) asparagine glycans are attached at residues asparagine 289, asparagine 346, asparagine 363, asparagine 379, asparagine 436, asparagine 506, asparagine 507, and asparagine 546. A disulfide bridge connects residues cysteine 336 and cysteine 368. Cystine bridges form between cysteine 520–cysteine 552, cysteine 558–cysteine 569, cysteine 563–cysteine 578, and cysteine 580–cysteine 590. An EGF-like 1 domain is found at 554–591 (IIDRCVPNHCERGGKCSQTWDSFKCTCDETGYTGATCH). The region spanning 592–798 (NSIYEPSCEA…LRCQGDRNYW (207 aa)) is the Fibrinogen C-terminal domain. N-linked (GlcNAc...) asparagine glycans are attached at residues asparagine 630 and asparagine 735. The Laminin G-like 3 domain occupies 799 to 963 (NAASFPNPSS…KVTSGFISGC (165 aa)). Disulfide bonds link cysteine 936/cysteine 963, cysteine 967/cysteine 980, cysteine 974/cysteine 989, and cysteine 991/cysteine 1001. One can recognise an EGF-like 2 domain in the interval 964–1002 (SGHCTSYGTNCENGGKCLERYHGYSCDCSNTAYDGTFCN). Residues 1023–1214 (ATNARDSSSR…IQGELVESNC (192 aa)) enclose the Laminin G-like 4 domain. Asparagine 1116 and asparagine 1198 each carry an N-linked (GlcNAc...) asparagine glycan. Cysteine 1178 and cysteine 1214 form a disulfide bridge. The chain crosses the membrane as a helical span at residues 1263–1283 (IIGGVIAVVIFTILCTLVFLI). The Cytoplasmic portion of the chain corresponds to 1284-1331 (RYMFRHKGTYHTNEAKGAESAESADAAIMNNDPNFTETIDESKKEWLI). Serine 1303 and serine 1306 each carry phosphoserine.

This sequence belongs to the neurexin family. Interacts (via C-terminus) with KCNA2.

The protein localises to the membrane. It localises to the cell projection. The protein resides in the axon. Its subcellular location is the cell junction. It is found in the paranodal septate junction. Functionally, required for gap junction formation. Required, with CNTNAP1, for radial and longitudinal organization of myelinated axons. Plays a role in the formation of functional distinct domains critical for saltatory conduction of nerve impulses in myelinated nerve fibers. Demarcates the juxtaparanodal region of the axo-glial junction. The chain is Contactin-associated protein-like 2 (CNTNAP2) from Pongo abelii (Sumatran orangutan).